The chain runs to 190 residues: MPKRKKQDQPPPLPQQQQHLALSERDEPGDEEDERPMGPPSLLGPPPMANGKPGDPKSAFHRGPPGSRGRMIPPLLSLPPPPRGRGYIRGGLGPRSSPYGRGWWGINAEPPFPGPGHGGPSRESFYKEARNPRRLRSWSLVKNTYPPKDSPQMMEDKSDRPVCRHFSKKGHCRYEDHCAFYHPGVNGPPL.

3 disordered regions span residues Met1 to Pro94, Pro110 to Arg130, and Lys142 to Pro161. Residues Met37–Met48 are compositionally biased toward pro residues. The C3H1-type zinc finger occupies Lys157–Val185.

This is Proline-rich protein 3 (Prr3) from Mus musculus (Mouse).